The chain runs to 405 residues: UDP-N-acetylglucosamine--N-acetylmuramyl-(pentapeptide) pyrophosphoryl-undecaprenol N-acetylglucosamine transferase (405 aa).

Residues 11–13 (TGG), asparagine 127, arginine 168, serine 191, isoleucine 248, and glutamine 293 contribute to the UDP-N-acetyl-alpha-D-glucosamine site.

It belongs to the glycosyltransferase 28 family. MurG subfamily.

The protein resides in the cell inner membrane. It catalyses the reaction di-trans,octa-cis-undecaprenyl diphospho-N-acetyl-alpha-D-muramoyl-L-alanyl-D-glutamyl-meso-2,6-diaminopimeloyl-D-alanyl-D-alanine + UDP-N-acetyl-alpha-D-glucosamine = di-trans,octa-cis-undecaprenyl diphospho-[N-acetyl-alpha-D-glucosaminyl-(1-&gt;4)]-N-acetyl-alpha-D-muramoyl-L-alanyl-D-glutamyl-meso-2,6-diaminopimeloyl-D-alanyl-D-alanine + UDP + H(+). Its pathway is cell wall biogenesis; peptidoglycan biosynthesis. In terms of biological role, cell wall formation. Catalyzes the transfer of a GlcNAc subunit on undecaprenyl-pyrophosphoryl-MurNAc-pentapeptide (lipid intermediate I) to form undecaprenyl-pyrophosphoryl-MurNAc-(pentapeptide)GlcNAc (lipid intermediate II). This is UDP-N-acetylglucosamine--N-acetylmuramyl-(pentapeptide) pyrophosphoryl-undecaprenol N-acetylglucosamine transferase from Sorangium cellulosum (strain So ce56) (Polyangium cellulosum (strain So ce56)).